The primary structure comprises 299 residues: ATP phosphoribosyltransferase (299 aa).

It belongs to the ATP phosphoribosyltransferase family. Long subfamily. Equilibrium between an active dimeric form, an inactive hexameric form and higher aggregates. Interconversion between the various forms is largely reversible and is influenced by the natural substrates and inhibitors of the enzyme. Mg(2+) serves as cofactor.

The protein resides in the cytoplasm. It catalyses the reaction 1-(5-phospho-beta-D-ribosyl)-ATP + diphosphate = 5-phospho-alpha-D-ribose 1-diphosphate + ATP. It functions in the pathway amino-acid biosynthesis; L-histidine biosynthesis; L-histidine from 5-phospho-alpha-D-ribose 1-diphosphate: step 1/9. With respect to regulation, feedback inhibited by histidine. Its function is as follows. Catalyzes the condensation of ATP and 5-phosphoribose 1-diphosphate to form N'-(5'-phosphoribosyl)-ATP (PR-ATP). Has a crucial role in the pathway because the rate of histidine biosynthesis seems to be controlled primarily by regulation of HisG enzymatic activity. In Shigella dysenteriae serotype 1 (strain Sd197), this protein is ATP phosphoribosyltransferase.